Here is a 257-residue protein sequence, read N- to C-terminus: UPF0246 protein Ssed_1188 (257 aa).

This sequence belongs to the UPF0246 family.

This is UPF0246 protein Ssed_1188 from Shewanella sediminis (strain HAW-EB3).